A 559-amino-acid chain; its full sequence is (-)-drimenol synthase (559 aa).

The Mg(2+) site is built by Asp-311, Asp-315, Asp-456, Ser-460, and Glu-464. Residues 311–315 (DDIYD) carry the DDXXD motif motif.

This sequence belongs to the terpene synthase family. Mg(2+) serves as cofactor.

The enzyme catalyses (2E,6E)-farnesyl diphosphate + H2O = (5S,9S,10S)-drim-7-en-11-ol + diphosphate. The protein operates within secondary metabolite biosynthesis; terpenoid biosynthesis. Catalyzes the conversion of (2E,6E)-farnesyl diphosphate (FPP) into drimenol, a precursor of the sesquiterpenoid polygodial. Polygodial has been shown to be an antifeedant for a number of herbivorous insects. The polypeptide is (-)-drimenol synthase (Persicaria hydropiper (Marshpepper knotweed)).